The primary structure comprises 408 residues: 8-amino-7-oxononanoate synthase (408 aa).

Arg20 is a binding site for substrate. 117 to 118 contacts pyridoxal 5'-phosphate; it reads GY. His142 serves as a coordination point for substrate. Residues Ser188, His216, and Thr244 each contribute to the pyridoxal 5'-phosphate site. Lys247 carries the N6-(pyridoxal phosphate)lysine modification. Residue Thr367 coordinates substrate.

Belongs to the class-II pyridoxal-phosphate-dependent aminotransferase family. BioF subfamily. As to quaternary structure, homodimer. Pyridoxal 5'-phosphate serves as cofactor.

It catalyses the reaction 6-carboxyhexanoyl-[ACP] + L-alanine + H(+) = (8S)-8-amino-7-oxononanoate + holo-[ACP] + CO2. It participates in cofactor biosynthesis; biotin biosynthesis. Catalyzes the decarboxylative condensation of pimeloyl-[acyl-carrier protein] and L-alanine to produce 8-amino-7-oxononanoate (AON), [acyl-carrier protein], and carbon dioxide. The chain is 8-amino-7-oxononanoate synthase from Cupriavidus pinatubonensis (strain JMP 134 / LMG 1197) (Cupriavidus necator (strain JMP 134)).